Here is a 293-residue protein sequence, read N- to C-terminus: Elongation factor Ts (293 aa).

Residues 80–83 form an involved in Mg(2+) ion dislocation from EF-Tu region; that stretch reads TDFV.

Belongs to the EF-Ts family.

It localises to the cytoplasm. Functionally, associates with the EF-Tu.GDP complex and induces the exchange of GDP to GTP. It remains bound to the aminoacyl-tRNA.EF-Tu.GTP complex up to the GTP hydrolysis stage on the ribosome. This is Elongation factor Ts from Burkholderia cenocepacia (strain ATCC BAA-245 / DSM 16553 / LMG 16656 / NCTC 13227 / J2315 / CF5610) (Burkholderia cepacia (strain J2315)).